A 426-amino-acid chain; its full sequence is Lipid droplet localized protein (426 aa).

Residues 278–298 (FYGYLIGLWIMFLSIFVKYPF) traverse the membrane as a helical segment.

It belongs to the saccharopine dehydrogenase family.

The protein resides in the membrane. The protein localises to the lipid droplet. The chain is Lipid droplet localized protein from Caenorhabditis elegans.